The sequence spans 36 residues: U14-myrmicitoxin-Tb1a (36 aa).

The N-terminal stretch at M1 to G23 is a signal peptide. Residues E24–P25 constitute a propeptide that is removed on maturation. Position 35 is a glutamine amide (Q35).

In terms of tissue distribution, expressed by the venom gland.

The protein localises to the secreted. Venom protein with unknown function. Does not induce paralysis when a high dose is administered by intrathoracic injection into the blowfly Lucilia caesar. The chain is U14-myrmicitoxin-Tb1a from Tetramorium bicarinatum (Tramp ant).